The primary structure comprises 509 residues: Ankyrin repeat domain-containing protein 13C (509 aa).

A compositionally biased stretch (basic and acidic residues) spans 1–19 (MTGEKIRSLHRDQKPSKDE). Residues 1 to 42 (MTGEKIRSLHRDQKPSKDEDLLEPDEEATAGGTFTRTGKLKN) form a disordered region. ANK repeat units lie at residues 79–110 (DAYF…QKDN), 111–140 (HGNT…PVKV), and 144–173 (QGWS…QQSR).

It is found in the endoplasmic reticulum membrane. In terms of biological role, acts as a molecular chaperone for G protein-coupled receptors, regulating their biogenesis and exit from the ER. In Xenopus tropicalis (Western clawed frog), this protein is Ankyrin repeat domain-containing protein 13C (ankrd13c).